The chain runs to 179 residues: SADVAGAVIDGAGLGFDVLKTVLEALGNVKRKIAVGIDNESGKTWTAMNTYFRSGTSDIVLPHKVAHGKALLYNGQKNRGPVATGVVGVIAYSMSDGNTLAVLFSVPYDYNWYSNWWNVRVYKGQKRADQRMYEELYYHRSPFRGDNGWHSRGLGYGLKSRGFMNSSGHAILEIHVTKA.

An N-terminal alpha-helix that contributes to the pore region spans residues 1–29 (SADVAGAVIDGAGLGFDVLKTVLEALGNV). An N-(acyl)-sphingosylphosphocholine is bound at residue arginine 31. N-acetyl-D-glucosamine 6-sulfate is bound by residues tyrosine 51 and arginine 53. An N-(acyl)-sphingosylphosphocholine is bound by residues arginine 53, serine 54, arginine 79, glycine 85, tyrosine 108, tyrosine 113, serine 114, tryptophan 116, tyrosine 133, tyrosine 137, tyrosine 138, arginine 144, and glycine 168. Positions 105–120 (SVPYDYNWYSNWWNVR) are trp-rich region, which is important for the binding to lipid membrane. Tyrosine 138 provides a ligand contact to N-acetyl-D-glucosamine 6-sulfate. The short motif at 144–146 (RGD) is the Cell attachment site, crucial for protein stability element.

Belongs to the actinoporin family. Sea anemone subfamily. Octamer or nonamer in membranes. Monomer in the soluble state.

It localises to the secreted. The protein resides in the nematocyst. Its subcellular location is the target cell membrane. Its function is as follows. Pore-forming toxin (PFT) that consists of a crown-shaped octamer or nonamer that forms cation-selective hydrophilic pores of about 1.5 nm (inside) and 13 nm (outside). It causes cardiac stimulation and cytolysis (EC(50)=1.6 nM on erythrocytes). Interestingly, the Phe-16 is crucial for hemolysis. Pore formation is a multi-step process that involves specific recognition of membrane sphingomyelin (but neither cholesterol nor phosphatidylcholine) using aromatic rich region and adjacent phosphocholine (POC) binding site, firm binding to the membrane (mainly driven by hydrophobic interactions) accompanied by the transfer of the N-terminal region to the lipid-water interface and finally pore formation after oligomerization of monomers. It is probable that a dimeric form is an assembly intermediate before the complete oligomerization. The formation of stable pores occurs only in vesicles composed of DOPC/SM (there is no oligomerization when the PFT is treated with vesicles of DOPC or SM alone). The transmembrane pore displays 8 lateral perforations, one at each subunit-subunit interface, partially occupied by the acyl-chain region of a bridging lipid. Each pore contains 24 lipid molecules, firmly bound to each subunit, that is, 3 lipids (L1, L2, L3, L4 and/or L5) are associated to each subunit. Lipid L1 bridges 2 subunits, whereas lipids L2 and L3 bind to sites at single subunit. The sequence is that of DELTA-actitoxin-Afr1a from Actinia fragacea (Strawberry anemone).